The sequence spans 396 residues: NADH-quinone oxidoreductase subunit D (396 aa).

It belongs to the complex I 49 kDa subunit family. NDH-1 is composed of 14 different subunits. Subunits NuoB, C, D, E, F, and G constitute the peripheral sector of the complex.

The protein localises to the cell inner membrane. It carries out the reaction a quinone + NADH + 5 H(+)(in) = a quinol + NAD(+) + 4 H(+)(out). In terms of biological role, NDH-1 shuttles electrons from NADH, via FMN and iron-sulfur (Fe-S) centers, to quinones in the respiratory chain. The immediate electron acceptor for the enzyme in this species is believed to be ubiquinone. Couples the redox reaction to proton translocation (for every two electrons transferred, four hydrogen ions are translocated across the cytoplasmic membrane), and thus conserves the redox energy in a proton gradient. The chain is NADH-quinone oxidoreductase subunit D from Rhodopseudomonas palustris (strain BisA53).